Consider the following 211-residue polypeptide: N-(5'-phosphoribosyl)anthranilate isomerase (211 aa).

Belongs to the TrpF family.

It catalyses the reaction N-(5-phospho-beta-D-ribosyl)anthranilate = 1-(2-carboxyphenylamino)-1-deoxy-D-ribulose 5-phosphate. It functions in the pathway amino-acid biosynthesis; L-tryptophan biosynthesis; L-tryptophan from chorismate: step 3/5. This chain is N-(5'-phosphoribosyl)anthranilate isomerase, found in Nitrosomonas europaea (strain ATCC 19718 / CIP 103999 / KCTC 2705 / NBRC 14298).